Consider the following 695-residue polypeptide: MAAATIVHDTSEAVELCPAYGLYLKPITKMTISVALPQLKQPGKSISNWEVMERLKGMVQNHQFSTLRISKSTMDFIRFEGEVENKSLVKSFLACLDGKTIKLSGFSDILKVRAAEFKIDFPTRHDWDSFFRDAKDMNETLPGERPDTIHLEGLPCKWFALKESGSEKPSEDVLVKVFEKFGEIRNVDIPMLDPYREEMTGRNFHTFSFGGHLNFEAYVQYREYMGFIQAMSALRGMKLMYKGEDGKAVACNIKVSFDSTKHLSDASIKKRQLERQKLQELEQQREEQKRREKEAEERQRAEERKQKELEELERERKREEKLRKREQKQRDRELRRNQKKLEKLQAEEQKQLQEKIKLEERKLLLAQRNLQSIRLIAELLSRAKAVKLREQEQKEEKLRLQQQEERRRLQEAELRRVEEEKERALGLQRKERELRERLLSILLSKKPDDSHTHDELGVAHADLLQPVLDILQTVSSGCVSATTLHPLGGQPPAGAPKESPAHPEADGAPKSVNGSVAEEAPCKEVQSSCRVVPEDGSPEKRCPGGVLSCIPDNNQQPKGIPACEQNVSRKDTRSEQDKCNREPSKGRGRATGDGLADRHKRERSRARRASSREDGRPRKERRPHKKHAYKDDSPRRRSTSPDHTRSRRSHSKDRHRRERSRERRGSASRKHSRHRRRSERSRSRSPSRHRSTWNR.

The segment at 83 to 112 (VENKSLVKSFLACLDGKTIKLSGFSDILKV) is PKA-RI and PKA-RII subunit binding domain. K118 participates in a covalent cross-link: Glycyl lysine isopeptide (Lys-Gly) (interchain with G-Cter in SUMO1); alternate. K118 participates in a covalent cross-link: Glycyl lysine isopeptide (Lys-Gly) (interchain with G-Cter in SUMO2); alternate. The RRM domain maps to 147–256 (DTIHLEGLPC…KAVACNIKVS (110 aa)). The tract at residues 279 to 337 (QELEQQREEQKRREKEAEERQRAEERKQKELEELERERKREEKLRKREQKQRDRELRRN) is disordered. Residues 425-454 (LGLQRKERELRERLLSILLSKKPDDSHTHD) are PKA-RI-alpha subunit binding domain. Positions 482–695 (TTLHPLGGQP…PSRHRSTWNR (214 aa)) are disordered. Position 537 is a phosphoserine (S537). A compositionally biased stretch (basic and acidic residues) spans 567 to 585 (VSRKDTRSEQDKCNREPSK). Basic residues-rich tracts occupy residues 598–609 (RHKRERSRARRA) and 618–628 (RKERRPHKKHA). Over residues 629–644 (YKDDSPRRRSTSPDHT) the composition is skewed to basic and acidic residues. A Phosphoserine modification is found at S633. Basic residues-rich tracts occupy residues 645–658 (RSRR…HRRE) and 666–695 (SASR…TWNR).

As to quaternary structure, monomer. Component of the spliceosome. Interacts with ZRANB2 and SFRS1/ASF through its Arg/Ser-rich domain. Interacts with RI and RII subunits of PKA. In terms of tissue distribution, widely expressed. Found in heart, brain, lung, liver, skeletal muscle, kidney and pancreas. Expressed in activated B-cells and placenta. Expressed in all cell lines tested including Jurkat-TAg, U-937 and HEK293 cells.

Its subcellular location is the nucleus speckle. Splice factor regulating alternative splice site selection for certain mRNA precursors. Mediates regulation of pre-mRNA splicing in a PKA-dependent manner. The protein is A-kinase anchor protein 17A (AKAP17A) of Homo sapiens (Human).